Consider the following 389-residue polypeptide: Phospho-N-acetylmuramoyl-pentapeptide-transferase (389 aa).

10 consecutive transmembrane segments (helical) span residues 25–45 (RAVM…PWVI), 74–94 (MGGV…CDWG), 97–117 (FIWV…VDDY), 134–154 (FFWQ…SVSE), 190–210 (VSYP…IVGS), 222–242 (GLVI…AYVM), 259–279 (AGEL…FLWF), 286–306 (VFMG…VAVI), 311–331 (IVLF…MLQV), and 366–386 (QVTV…LSTL).

Belongs to the glycosyltransferase 4 family. MraY subfamily. Requires Mg(2+) as cofactor.

The protein resides in the cell inner membrane. The enzyme catalyses UDP-N-acetyl-alpha-D-muramoyl-L-alanyl-gamma-D-glutamyl-meso-2,6-diaminopimeloyl-D-alanyl-D-alanine + di-trans,octa-cis-undecaprenyl phosphate = di-trans,octa-cis-undecaprenyl diphospho-N-acetyl-alpha-D-muramoyl-L-alanyl-D-glutamyl-meso-2,6-diaminopimeloyl-D-alanyl-D-alanine + UMP. It participates in cell wall biogenesis; peptidoglycan biosynthesis. In terms of biological role, catalyzes the initial step of the lipid cycle reactions in the biosynthesis of the cell wall peptidoglycan: transfers peptidoglycan precursor phospho-MurNAc-pentapeptide from UDP-MurNAc-pentapeptide onto the lipid carrier undecaprenyl phosphate, yielding undecaprenyl-pyrophosphoryl-MurNAc-pentapeptide, known as lipid I. The polypeptide is Phospho-N-acetylmuramoyl-pentapeptide-transferase (Cupriavidus pinatubonensis (strain JMP 134 / LMG 1197) (Cupriavidus necator (strain JMP 134))).